Consider the following 138-residue polypeptide: Large ribosomal subunit protein uL14 (138 aa).

This sequence belongs to the universal ribosomal protein uL14 family. Part of the 50S ribosomal subunit. Forms a cluster with proteins L3 and L24e, part of which may contact the 16S rRNA in 2 intersubunit bridges.

In terms of biological role, binds to 23S rRNA. Forms part of two intersubunit bridges in the 70S ribosome. The protein is Large ribosomal subunit protein uL14 of Hyperthermus butylicus (strain DSM 5456 / JCM 9403 / PLM1-5).